The sequence spans 572 residues: Pentatricopeptide repeat-containing protein At5g15010, mitochondrial (572 aa).

The transit peptide at 1 to 57 (MRGIFLIRSRLSIFRAPAVKCLRFSNVLPSLSNNCIVRLYMEPPVACVLPLGLCSMF) directs the protein to the mitochondrion. PPR repeat units follow at residues 160–194 (SVRE…SPSL), 196–230 (NSQT…KLEM), 231–261 (GIDD…NKDK), 265–300 (DAKS…GVKH), 301–335 (DVVS…CIEP), 336–371 (DRKV…GIEP), 372–406 (NVVT…GLFP), 412–438 (HAFM…GCEP), 439–473 (TVET…TVGP), and 474–508 (DLSS…GMRP).

This sequence belongs to the PPR family. P subfamily.

The protein resides in the mitochondrion. This is Pentatricopeptide repeat-containing protein At5g15010, mitochondrial from Arabidopsis thaliana (Mouse-ear cress).